A 69-amino-acid chain; its full sequence is Alpha-elapitoxin-Lc2c (69 aa).

4 cysteine pairs are disulfide-bonded: Cys-3/Cys-20, Cys-13/Cys-41, Cys-45/Cys-56, and Cys-57/Cys-62.

Belongs to the three-finger toxin family. Long-chain subfamily. Type II alpha-neurotoxin sub-subfamily. As to expression, expressed by the venom gland.

The protein resides in the secreted. In terms of biological role, binds with high affinity to muscular nicotinic acetylcholine receptors (nAChRs), whereas it binds with a low affinity to neuronal alpha-7/CHRNA7 nAChRs. This chain is Alpha-elapitoxin-Lc2c, found in Laticauda colubrina (Yellow-lipped sea krait).